A 240-amino-acid chain; its full sequence is 2,3,4,5-tetrahydropyridine-2,6-dicarboxylate N-acetyltransferase (240 aa).

Belongs to the transferase hexapeptide repeat family. DapH subfamily.

The catalysed reaction is (S)-2,3,4,5-tetrahydrodipicolinate + acetyl-CoA + H2O = L-2-acetamido-6-oxoheptanedioate + CoA. Its pathway is amino-acid biosynthesis; L-lysine biosynthesis via DAP pathway; LL-2,6-diaminopimelate from (S)-tetrahydrodipicolinate (acetylase route): step 1/3. Functionally, catalyzes the transfer of an acetyl group from acetyl-CoA to tetrahydrodipicolinate. The protein is 2,3,4,5-tetrahydropyridine-2,6-dicarboxylate N-acetyltransferase of Staphylococcus epidermidis (strain ATCC 12228 / FDA PCI 1200).